The sequence spans 256 residues: 5'-nucleotidase SurE (256 aa).

A divalent metal cation is bound by residues D8, D9, S39, and N91.

This sequence belongs to the SurE nucleotidase family. The cofactor is a divalent metal cation.

Its subcellular location is the cytoplasm. It catalyses the reaction a ribonucleoside 5'-phosphate + H2O = a ribonucleoside + phosphate. Nucleotidase that shows phosphatase activity on nucleoside 5'-monophosphates. This chain is 5'-nucleotidase SurE, found in Marinobacter nauticus (strain ATCC 700491 / DSM 11845 / VT8) (Marinobacter aquaeolei).